A 228-amino-acid polypeptide reads, in one-letter code: Uracil-DNA glycosylase (228 aa).

The Proton acceptor role is filled by Asp64.

Belongs to the uracil-DNA glycosylase (UDG) superfamily. UNG family.

Its subcellular location is the cytoplasm. The enzyme catalyses Hydrolyzes single-stranded DNA or mismatched double-stranded DNA and polynucleotides, releasing free uracil.. Excises uracil residues from the DNA which can arise as a result of misincorporation of dUMP residues by DNA polymerase or due to deamination of cytosine. The sequence is that of Uracil-DNA glycosylase from Pectobacterium atrosepticum (strain SCRI 1043 / ATCC BAA-672) (Erwinia carotovora subsp. atroseptica).